The following is a 460-amino-acid chain: NADH-ubiquinone oxidoreductase chain 4 (460 aa).

13 consecutive transmembrane segments (helical) span residues 20 to 42 (SKWLWTTTTMNSFLIAFISLTWL), 61 to 81 (PLSTPLLVLTCWLLPLMILAS), 94 to 113 (RMYITLLASLQTFMIMAFGA), 114 to 134 (TKIIMFYIMFEATLIPTLIII), 148 to 168 (TYFLFYTLAGSLPLLVALLLL), 195 to 215 (IWWAGCLIAFLVKMPLYGMHL), 225 to 245 (PVAGSMILAAVLLKLGGYGMM), 258 to 278 (LAYPFIILALWGVIMTGLVCL), 285 to 304 (SLIAYSSVGHMGLVAGGILI), 308 to 330 (WGFTGAIILMIAHGLTSSALFCL), 351 to 371 (MVLPLATVWWFIANLANLALP), 380 to 400 (LMIITALFNWSPWTIIITGMG), and 436 to 456 (LLMTLHLIPIILLMLKPELMW).

It belongs to the complex I subunit 4 family. As to quaternary structure, core subunit of respiratory chain NADH dehydrogenase (Complex I) which is composed of 45 different subunits.

The protein localises to the mitochondrion inner membrane. The catalysed reaction is a ubiquinone + NADH + 5 H(+)(in) = a ubiquinol + NAD(+) + 4 H(+)(out). Its function is as follows. Core subunit of the mitochondrial membrane respiratory chain NADH dehydrogenase (Complex I) which catalyzes electron transfer from NADH through the respiratory chain, using ubiquinone as an electron acceptor. Essential for the catalytic activity and assembly of complex I. This is NADH-ubiquinone oxidoreductase chain 4 (mt-nd4) from Danio rerio (Zebrafish).